A 215-amino-acid chain; its full sequence is Adenylate kinase (215 aa).

10 to 15 (GAGKGT) serves as a coordination point for ATP. Positions 30–59 (STGDMLRAAVKAETELGLKAKSVMDSGGLV) are NMP. AMP-binding positions include T31, R36, 57–59 (GLV), 85–88 (GFPR), and Q92. Positions 122-159 (GRRVHEGSGRIYHTIFNPPKVECIDDVTGEPLLQRKDD) are LID. ATP-binding positions include R123 and 132-133 (IY). R156 and R167 together coordinate AMP. G201 contributes to the ATP binding site.

Belongs to the adenylate kinase family. Monomer.

It is found in the cytoplasm. The catalysed reaction is AMP + ATP = 2 ADP. It functions in the pathway purine metabolism; AMP biosynthesis via salvage pathway; AMP from ADP: step 1/1. Functionally, catalyzes the reversible transfer of the terminal phosphate group between ATP and AMP. Plays an important role in cellular energy homeostasis and in adenine nucleotide metabolism. The protein is Adenylate kinase of Pseudomonas savastanoi pv. phaseolicola (strain 1448A / Race 6) (Pseudomonas syringae pv. phaseolicola (strain 1448A / Race 6)).